We begin with the raw amino-acid sequence, 127 residues long: uncharacterized protein (127 aa).

The VOC domain occupies 1 to 127 (MKIVVTSIFV…CGNLIQIVQK (127 aa)).

Belongs to the glyoxalase I family.

This is an uncharacterized protein from Bacillus subtilis (strain 168).